The following is a 641-amino-acid chain: Macrolide export ATP-binding/permease protein MacB (641 aa).

An ABC transporter domain is found at 2-236 (IFLKNICKNI…LILKTMPKEK (235 aa)). 34-41 (GQSGSGKT) lines the ATP pocket. Helical transmembrane passes span 265–285 (ILTM…VALG), 519–539 (ACVA…IMLV), 571–591 (MICT…IFAF), and 604–624 (AYSV…FGFF).

This sequence belongs to the ABC transporter superfamily. Macrolide exporter (TC 3.A.1.122) family. In terms of assembly, homodimer.

It localises to the cell inner membrane. Its function is as follows. Non-canonical ABC transporter that contains transmembrane domains (TMD), which form a pore in the inner membrane, and an ATP-binding domain (NBD), which is responsible for energy generation. Confers resistance against macrolides. This is Macrolide export ATP-binding/permease protein MacB from Campylobacter jejuni subsp. jejuni serotype O:2 (strain ATCC 700819 / NCTC 11168).